The sequence spans 199 residues: Imidazoleglycerol-phosphate dehydratase (199 aa).

This sequence belongs to the imidazoleglycerol-phosphate dehydratase family.

The protein localises to the cytoplasm. It catalyses the reaction D-erythro-1-(imidazol-4-yl)glycerol 3-phosphate = 3-(imidazol-4-yl)-2-oxopropyl phosphate + H2O. It functions in the pathway amino-acid biosynthesis; L-histidine biosynthesis; L-histidine from 5-phospho-alpha-D-ribose 1-diphosphate: step 6/9. This Rhodospirillum rubrum (strain ATCC 11170 / ATH 1.1.1 / DSM 467 / LMG 4362 / NCIMB 8255 / S1) protein is Imidazoleglycerol-phosphate dehydratase.